The sequence spans 595 residues: MLSLSSPPWLLLLVLFFFANGSATVVSLAENVTLATLPSTSPISVSFSTTSSVVAPISTELENQTASSSNLNTNNEASDEQTGNSNSNTSSHSRNINGLPSSNSNIDNANSNSSSVSSLSTTTSAISGVDQQESLILATPTALNGSGTPPEHQTIGQAPPTKGEQEAILRALDWLKEKRASDYGWGNDTHVVILAKELSGGRDPNDSVDGHVQVIQELEDTLSVKEMEIEILAMLDRHHTLPKPLDLDKLARYVLALGSLCKDPKHFHGHDLVATLQHHEPAQDIEFALTTLSACSSAAHVRKRQIRRLLDIASGVTDQSVDAIAMVILALRCIVTDHRHRHLQHFVRRPARGLATLQDQRGSFGSLRSTALAMQALQDLEYDPAGHWNRTAASRYILSRQRADGGWSEEPLQDGQEPDIGVGLTADIILALGWKGLGAVRALQCDHVIRESSDPTENGEPKLAVPFGLSSSAEESDAKNISYTYTLWVGSNVTESFSLSLVSPKNTSFFKAMTQAAEMDPRFIFEAREWPNGHYVHTLYGKKEEPRGYHYWLLYRLPELPDPNNTPGNQLIAPVGVDELMVEDGEHYLYWYKKL.

The signal sequence occupies residues 1–23 (MLSLSSPPWLLLLVLFFFANGSA). 11 N-linked (GlcNAc...) asparagine glycosylation sites follow: asparagine 31, asparagine 63, asparagine 88, asparagine 112, asparagine 144, asparagine 187, asparagine 205, asparagine 389, asparagine 480, asparagine 492, and asparagine 506. Over residues 61–83 (LENQTASSSNLNTNNEASDEQTG) the composition is skewed to polar residues. Disordered stretches follow at residues 61 to 119 (LENQ…VSSL) and 141 to 164 (TALN…TKGE). A compositionally biased stretch (low complexity) spans 84–119 (NSNSNTSSHSRNINGLPSSNSNIDNANSNSSSVSSL).

The protein resides in the secreted. This is an uncharacterized protein from Drosophila melanogaster (Fruit fly).